A 663-amino-acid polypeptide reads, in one-letter code: Translation factor GUF1 homolog, mitochondrial (663 aa).

A mitochondrion-targeting transit peptide spans 1–33 (MAGAAALRRSARRVVLPGAYALSRALQHPERLL). The tr-type G domain occupies 55–247 (ERVRNFSIIA…AVIERIPSPP (193 aa)). Residues 64–71 (AHVDHGKS), 140–144 (DTPGH), and 194–197 (NKID) contribute to the GTP site.

This sequence belongs to the TRAFAC class translation factor GTPase superfamily. Classic translation factor GTPase family. LepA subfamily.

Its subcellular location is the mitochondrion inner membrane. The catalysed reaction is GTP + H2O = GDP + phosphate + H(+). In terms of biological role, promotes mitochondrial protein synthesis. May act as a fidelity factor of the translation reaction, by catalyzing a one-codon backward translocation of tRNAs on improperly translocated ribosomes. Binds to mitochondrial ribosomes in a GTP-dependent manner. This chain is Translation factor GUF1 homolog, mitochondrial, found in Oryza sativa subsp. japonica (Rice).